Consider the following 3779-residue polypeptide: Protein DDB_G0268328 (3779 aa).

Disordered stretches follow at residues 24–56 (RQIKSQNKLQNKSQNNGNNNNNKDNNNINKDGS), 1001–1028 (HEDEEEEGDGDNSNNSNSQDSDGDDDDD), 1137–1165 (QDSTLPKRKQHGYYHQQQQQQQYHQQQQQ), 1513–1538 (PTNSIYNNNNNNNNNNNNTNSSSLLS), 1656–1690 (ETTVLEKETKETKDNNLENNNNNTNNSNNNNNNKE), 2027–2054 (SNSSNNNNNNNDGSTTSTTTLNRSDSNN), 2144–2184 (NNNN…NNSS), 2280–2325 (ISTT…NEQQ), 2508–2527 (QINNNNNNNEKEEEEEREEG), 2720–2748 (DGNNNNNNNNNQNNNNQNNNNNQNNNDSS), 2975–3030 (ESND…DSIK), and 3427–3450 (QSNTLNGTGGGGGNGGGNNGSGKL). Low complexity-rich tracts occupy residues 26-56 (IKSQNKLQNKSQNNGNNNNNKDNNNINKDGS), 1011-1020 (DNSNNSNSQD), 1149-1165 (YYHQQQQQQQYHQQQQQ), and 1515-1538 (NSIYNNNNNNNNNNNNTNSSSLLS). Residues 1656–1671 (ETTVLEKETKETKDNN) show a composition bias toward basic and acidic residues. Over residues 1672–1687 (LENNNNNTNNSNNNNN) the composition is skewed to low complexity. Low complexity-rich tracts occupy residues 2144–2182 (NNNNNNNNNNNNNNNNNNNNNNNNNNNNNNNNNNNNNNN) and 2285–2322 (NNNNNNNNNNNNNNNNNNNNNNNNNNNNNNNNNNNNNN). 2 stretches are compositionally biased toward low complexity: residues 2722 to 2745 (NNNNNNNNNQNNNNQNNNNNQNNN) and 3015 to 3030 (SVNNNNNNNSNSDSIK). The span at 3433–3446 (GTGGGGGNGGGNNG) shows a compositional bias: gly residues.

The protein is Protein DDB_G0268328 of Dictyostelium discoideum (Social amoeba).